A 561-amino-acid chain; its full sequence is Alpha-1D adrenergic receptor (561 aa).

Topologically, residues 1 to 90 (MTFRDILSVT…VGGLVVSAQG (90 aa)) are extracellular. The segment at 10-71 (TFEGPRSSSS…SSTGEPGAAA (62 aa)) is disordered. The segment covering 21–56 (GGSGAGGGAGTVGPEGGAVGGVPGATGGGAVVGTGS) has biased composition (gly residues). Residues Asn-60 and Asn-76 are each glycosylated (N-linked (GlcNAc...) asparagine). Residues 91 to 115 (VGVGVFLAAFILTAVAGNLLVILSV) form a helical membrane-spanning segment. Residues 116-127 (ACNRHLQTVTNY) are Cytoplasmic-facing. The helical transmembrane segment at 128–153 (FIVNLAVADLLLSAAVLPFSATMEVL) threads the bilayer. Residues 154-163 (GFWAFGRTFC) lie on the Extracellular side of the membrane. A helical transmembrane segment spans residues 164–186 (DVWAAVDVLCCTASILSLCTISV). The Cytoplasmic segment spans residues 187 to 207 (DRYVGVRHSLKYPAIMTERKA). A helical membrane pass occupies residues 208-232 (AAILALLWAVALVVSVGPLLGWKEP). The Extracellular segment spans residues 233–245 (VPPDERFCGITEE). The helical transmembrane segment at 246–269 (VGYAIFSSVCSFYLPMAVIVVMYC) threads the bilayer. The Cytoplasmic segment spans residues 270 to 342 (RVYVVARSTT…KFSREKKAAK (73 aa)). Residues 343 to 367 (TLAIVVGVFVLCWFPFFFVLPLGSL) traverse the membrane as a helical segment. Residues 368 to 374 (FPQLKPS) are Extracellular-facing. A helical transmembrane segment spans residues 375-399 (EGVFKVIFWLGYFNSCVNPLIYPCS). Residues 400 to 561 (SREFKRAFLR…DYSNLRETDI (162 aa)) are Cytoplasmic-facing. Cys-413 is lipidated: S-palmitoyl cysteine. A disordered region spans residues 452–481 (APLALTAHPGAGSADTPETQDSVSSSRKPA). Over residues 467 to 479 (TPETQDSVSSSRK) the composition is skewed to polar residues.

It belongs to the G-protein coupled receptor 1 family. Adrenergic receptor subfamily. ADRA1D sub-subfamily. As to quaternary structure, interacts with FLNA (via filamin repeat 21); increases PKA-mediated phosphorylation of FLNA. In terms of processing, palmitoylated. Palmitoylation by ZDHHC21 may increase the expression of the receptor and regulate downstream signaling. Vas deferens, hippocampus, cerebral cortex, aorta, brain stem, heart and spleen.

It is found in the cell membrane. In terms of biological role, this alpha-adrenergic receptor mediates its effect through the influx of extracellular calcium. This is Alpha-1D adrenergic receptor (Adra1d) from Rattus norvegicus (Rat).